The following is a 311-amino-acid chain: Geranylgeranyl transferase type-2 subunit alpha (311 aa).

Residues 12 to 43 adopt a coiled-coil conformation; the sequence is EKAKAQRLKELEKIESYNKLVKSFEELREKQN. PFTA repeat units follow at residues 49-82, 93-126, 129-162, 164-197, and 206-239; these read ISLSVSKLVLIENPEFYTIWNYRRLAILQFTETK, NEMKFLEECIQRFTKSYWIWFHRQWIALRMDNCD, REMKLCTKLLNFDLRNFHCWGHRRFILKHSNIKL, DELKYTTEKVEQNFSNYSAWHQRSSILPKIYKEP, and EEFELVRNAVYTEPKDSSSWIYHKWLVATIKSIP.

Belongs to the protein prenyltransferase subunit alpha family. In terms of assembly, heterodimer of an alpha and a beta subunit.

It carries out the reaction geranylgeranyl diphosphate + L-cysteinyl-[protein] = S-geranylgeranyl-L-cysteinyl-[protein] + diphosphate. Catalyzes the transfer of a geranylgeranyl moiety from geranylgeranyl diphosphate to proteins with a C-terminal sequence motif -XCC or -XCXC, where both cysteines may become modified. In Dictyostelium discoideum (Social amoeba), this protein is Geranylgeranyl transferase type-2 subunit alpha (rabggta).